Here is a 670-residue protein sequence, read N- to C-terminus: Amyloid beta A4 precursor protein-binding family B member 1-interacting protein (670 aa).

At S55 the chain carries Phosphoserine. The Ras-associating domain occupies 179–266; that stretch reads KKLVVKVHMD…KVLFLEKEER (88 aa). The PH domain occupies 313 to 422; sequence VPELEGALYL…WVMGIRIAKY (110 aa). The segment at 449–653 is disordered; sequence VGTPMPAQPS…PGAPGNSEQD (205 aa). Residues 456-475 are compositionally biased toward polar residues; sequence QPSTVSSGLKTGTSQPNGQM. S532 is modified (phosphoserine). At T534 the chain carries Phosphothreonine. A Phosphoserine modification is found at S537. Pro residues-rich tracts occupy residues 553-567, 576-599, 606-615, and 625-634; these read PHPP…PPPP, LPPP…PPPA, LPPPPPPPPC, and PLPPKKPLVP.

Belongs to the MRL family. In terms of assembly, interacts, through the N-terminal Pro-rich region, with the WW domain of APBB1. Interacts with RAP1A, PFN1, VASP and ENAH. As to expression, ubiquitously expressed with high expression in the hematopoietic system.

It localises to the cell membrane. It is found in the cell projection. Its subcellular location is the lamellipodium. The protein localises to the cell junction. The protein resides in the focal adhesion. It localises to the cytoplasm. It is found in the cytoskeleton. Appears to function in the signal transduction from Ras activation to actin cytoskeletal remodeling. Suppresses insulin-induced promoter activities through AP1 and SRE. Mediates Rap1-induced adhesion. This chain is Amyloid beta A4 precursor protein-binding family B member 1-interacting protein (Apbb1ip), found in Mus musculus (Mouse).